Consider the following 207-residue polypeptide: Ubiquinol-cytochrome c reductase iron-sulfur subunit (207 aa).

The helical transmembrane segment at Leu24–Val44 threads the bilayer. Residues Pro100–Leu199 form the Rieske domain. [2Fe-2S] cluster contacts are provided by Cys134, His136, Cys162, and His165. Cys139 and Cys164 are oxidised to a cystine.

The main subunits of complex b-c1 are: cytochrome b, cytochrome c1 and the Rieske protein. It depends on [2Fe-2S] cluster as a cofactor.

It localises to the cell membrane. It carries out the reaction a quinol + 2 Fe(III)-[cytochrome c](out) = a quinone + 2 Fe(II)-[cytochrome c](out) + 2 H(+)(out). Component of the ubiquinol-cytochrome c reductase complex (complex III or cytochrome b-c1 complex), which is a respiratory chain that generates an electrochemical potential coupled to ATP synthesis. In Allochromatium vinosum (strain ATCC 17899 / DSM 180 / NBRC 103801 / NCIMB 10441 / D) (Chromatium vinosum), this protein is Ubiquinol-cytochrome c reductase iron-sulfur subunit (petA).